The following is a 334-amino-acid chain: N-acetyl-gamma-glutamyl-phosphate reductase (334 aa).

Residue C154 is part of the active site.

This sequence belongs to the NAGSA dehydrogenase family. Type 1 subfamily.

The protein resides in the cytoplasm. It carries out the reaction N-acetyl-L-glutamate 5-semialdehyde + phosphate + NADP(+) = N-acetyl-L-glutamyl 5-phosphate + NADPH + H(+). It participates in amino-acid biosynthesis; L-arginine biosynthesis; N(2)-acetyl-L-ornithine from L-glutamate: step 3/4. Its function is as follows. Catalyzes the NADPH-dependent reduction of N-acetyl-5-glutamyl phosphate to yield N-acetyl-L-glutamate 5-semialdehyde. The protein is N-acetyl-gamma-glutamyl-phosphate reductase of Yersinia pestis.